The sequence spans 438 residues: 5-methylthioadenosine/S-adenosylhomocysteine deaminase (438 aa).

The Zn(2+) site is built by H66 and H68. Positions 95, 148, and 188 each coordinate substrate. Residue H215 participates in Zn(2+) binding. The substrate site is built by E218 and D305. Residue D305 participates in Zn(2+) binding.

Belongs to the metallo-dependent hydrolases superfamily. MTA/SAH deaminase family. The cofactor is Zn(2+).

It carries out the reaction S-adenosyl-L-homocysteine + H2O + H(+) = S-inosyl-L-homocysteine + NH4(+). The enzyme catalyses S-methyl-5'-thioadenosine + H2O + H(+) = S-methyl-5'-thioinosine + NH4(+). Catalyzes the deamination of 5-methylthioadenosine and S-adenosyl-L-homocysteine into 5-methylthioinosine and S-inosyl-L-homocysteine, respectively. Is also able to deaminate adenosine. The chain is 5-methylthioadenosine/S-adenosylhomocysteine deaminase from Halalkalibacterium halodurans (strain ATCC BAA-125 / DSM 18197 / FERM 7344 / JCM 9153 / C-125) (Bacillus halodurans).